A 176-amino-acid chain; its full sequence is 2-oxo-4-hydroxy-4-carboxy-5-ureidoimidazoline decarboxylase (176 aa).

H70 serves as the catalytic Proton donor; for OHCU decarboxylase activity. Substrate-binding positions include P71, 83–87 (SQEEQ), and 118–122 (FIMAV). A disordered region spans residues 72–96 (DLGERTEMTDESQEEQASAGLDRLP).

It belongs to the OHCU decarboxylase family.

The enzyme catalyses 5-hydroxy-2-oxo-4-ureido-2,5-dihydro-1H-imidazole-5-carboxylate + H(+) = (S)-allantoin + CO2. It participates in purine metabolism; urate degradation; (S)-allantoin from urate: step 3/3. Its function is as follows. Catalyzes the stereoselective decarboxylation of 2-oxo-4-hydroxy-4-carboxy-5-ureidoimidazoline (OHCU) to (S)-allantoin. In Halalkalicoccus jeotgali (strain DSM 18796 / CECT 7217 / JCM 14584 / KCTC 4019 / B3), this protein is 2-oxo-4-hydroxy-4-carboxy-5-ureidoimidazoline decarboxylase.